The primary structure comprises 36 residues: Termicin (36 aa).

3 cysteine pairs are disulfide-bonded: cysteine 2–cysteine 24, cysteine 7–cysteine 29, and cysteine 11–cysteine 31. Glycine 36 carries the glycine amide modification.

As to expression, expressed in salivary glands and hemocytes.

It localises to the secreted. In terms of biological role, weak activity against Gram-positive bacteria B.megaterium, S.pyogenes and M.luteus, strong activity against yeasts C.albicans, C.neoformans and S.cerevisiae and filamentous fungi F.oxysporum, F.culmorum, N.crassa and N.hematococca. Less active against filamentous fungus T.viride. Inactive against Gram-positive bacteria A.viridans and S.aureus, filamentous fungi A.fumigatus and B.bassiana and yeast C.glabrata. This chain is Termicin, found in Pseudacanthotermes spiniger.